The following is a 178-amino-acid chain: Probetacellulin (178 aa).

Residues 1–31 form the signal peptide; the sequence is MDRAARCSGASSLPLLLALALGLVILHCVVA. Residues 32–118 are Extracellular-facing; that stretch reads DGNSTRSPET…LFYLRGDRGQ (87 aa). Residue N34 is glycosylated (N-linked (GlcNAc...) asparagine). Residues 65–105 enclose the EGF-like domain; the sequence is HFSRCPKQYKHYCIKGRCRFVVAEQTPSCVCDEGYIGARCE. 3 cysteine pairs are disulfide-bonded: C69/C82, C77/C93, and C95/C104. Positions 112–178 are cleaved as a propeptide — removed in mature form; it reads LRGDRGQILV…NEDIEETNIA (67 aa). A helical membrane pass occupies residues 119–139; it reads ILVICLIAVMVVFIILVIGVC. The Cytoplasmic portion of the chain corresponds to 140–178; it reads TCCHPLRKRRKRKKKEEEMETLGKDITPINEDIEETNIA.

In terms of assembly, monomer. Interacts with EGFR and ERBB4. In terms of tissue distribution, synthesized in several tissues and tumor cells. Predominantly expressed in pancreas and small intestine.

The protein resides in the secreted. It is found in the extracellular space. The protein localises to the cell membrane. Functionally, growth factor that binds to EGFR, ERBB4 and other EGF receptor family members. Potent mitogen for retinal pigment epithelial cells and vascular smooth muscle cells. The protein is Probetacellulin (BTC) of Homo sapiens (Human).